A 100-amino-acid polypeptide reads, in one-letter code: MGALTKAEMAERLYEELGLNKREAKELVELFFEEIRQALEHNEQVKLSGFGNFDLRDKRQRPGRNPKTGEEIPITARRVVTFRPGQKLKARVEAYAGTKP.

The interval 53-72 (FDLRDKRQRPGRNPKTGEEI) is disordered.

It belongs to the bacterial histone-like protein family. In terms of assembly, heterodimer of an alpha and a beta chain.

This protein is one of the two subunits of integration host factor, a specific DNA-binding protein that functions in genetic recombination as well as in transcriptional and translational control. The chain is Integration host factor subunit alpha from Stutzerimonas stutzeri (strain A1501) (Pseudomonas stutzeri).